Here is a 565-residue protein sequence, read N- to C-terminus: uncharacterized protein (565 aa).

The next 10 helical transmembrane spans lie at 28–48, 73–93, 109–129, 169–189, 262–282, 315–335, 364–384, 393–413, 461–481, and 526–546; these read IFHF…LPFA, ASYG…DTGL, VLAI…FLVW, LFLF…FYFI, IVIQ…YPVL, LIVT…VITS, SLIF…FGVI, VFPW…AMFI, AFLV…LLPL, and TLGL…LTFV.

It belongs to the TrkH potassium transport family.

The protein resides in the cell membrane. This is an uncharacterized protein from Mycoplasma pneumoniae (strain ATCC 29342 / M129 / Subtype 1) (Mycoplasmoides pneumoniae).